The chain runs to 788 residues: Endonuclease MutS2 (788 aa).

Residue 334-341 (GPNTGGKT) coordinates ATP. The Smr domain maps to 713–788 (LDLRGQRYEE…GTGATIVYLQ (76 aa)).

This sequence belongs to the DNA mismatch repair MutS family. MutS2 subfamily. In terms of assembly, homodimer. Binds to stalled ribosomes, contacting rRNA.

In terms of biological role, endonuclease that is involved in the suppression of homologous recombination and thus may have a key role in the control of bacterial genetic diversity. Its function is as follows. Acts as a ribosome collision sensor, splitting the ribosome into its 2 subunits. Detects stalled/collided 70S ribosomes which it binds and splits by an ATP-hydrolysis driven conformational change. Acts upstream of the ribosome quality control system (RQC), a ribosome-associated complex that mediates the extraction of incompletely synthesized nascent chains from stalled ribosomes and their subsequent degradation. Probably generates substrates for RQC. In Lactobacillus johnsonii (strain CNCM I-12250 / La1 / NCC 533), this protein is Endonuclease MutS2.